Here is a 155-residue protein sequence, read N- to C-terminus: SsrA-binding protein (155 aa).

It belongs to the SmpB family.

The protein localises to the cytoplasm. Its function is as follows. Required for rescue of stalled ribosomes mediated by trans-translation. Binds to transfer-messenger RNA (tmRNA), required for stable association of tmRNA with ribosomes. tmRNA and SmpB together mimic tRNA shape, replacing the anticodon stem-loop with SmpB. tmRNA is encoded by the ssrA gene; the 2 termini fold to resemble tRNA(Ala) and it encodes a 'tag peptide', a short internal open reading frame. During trans-translation Ala-aminoacylated tmRNA acts like a tRNA, entering the A-site of stalled ribosomes, displacing the stalled mRNA. The ribosome then switches to translate the ORF on the tmRNA; the nascent peptide is terminated with the 'tag peptide' encoded by the tmRNA and targeted for degradation. The ribosome is freed to recommence translation, which seems to be the essential function of trans-translation. This is SsrA-binding protein from Streptococcus sanguinis (strain SK36).